The primary structure comprises 563 residues: Rab escort protein 1 (563 aa).

Residues 538-563 (ELFKEETSPAENTTEEENDGGVEIED) form a disordered region. The segment covering 550-563 (TTEEENDGGVEIED) has biased composition (acidic residues).

The protein belongs to the Rab GDI family. As to quaternary structure, heterotrimer composed of the alpha subunit RGTA, the beta subunit RGTB and REP; within this trimer, RGTA and RGTB form the catalytic component, while REP mediates peptide substrate binding. Expressed in roots, leaves and flowers.

The protein localises to the cytoplasm. Its function is as follows. Substrate-binding subunit of the Rab geranylgeranyltransferase (GGTase) complex. Binds unprenylated Rab proteins and presents the substrate peptide to the catalytic component composed of the alpha subunit RGTA and the beta subunit RGTB. Preferentially binds the GDP-bound form of Rab and stimulates geranylgeranylation of various Rab GTPases in vitro. The sequence is that of Rab escort protein 1 from Arabidopsis thaliana (Mouse-ear cress).